The primary structure comprises 73 residues: Translational regulator CsrA (73 aa).

The protein belongs to the CsrA/RsmA family. Homodimer; the beta-strands of each monomer intercalate to form a hydrophobic core, while the alpha-helices form wings that extend away from the core.

It localises to the cytoplasm. In terms of biological role, a translational regulator that binds mRNA to regulate translation initiation and/or mRNA stability. Usually binds in the 5'-UTR at or near the Shine-Dalgarno sequence preventing ribosome-binding, thus repressing translation. Its main target seems to be the major flagellin gene, while its function is anatagonized by FliW. This Lachnospira eligens (strain ATCC 27750 / DSM 3376 / VPI C15-48 / C15-B4) (Eubacterium eligens) protein is Translational regulator CsrA.